Consider the following 479-residue polypeptide: Dihydrolipoyl dehydrogenase (479 aa).

FAD-binding positions include 41-50 (EKRGALGGTC), lysine 59, alanine 124, and 153-155 (TGS). Cysteines 50 and 55 form a disulfide. NAD(+) contacts are provided by residues 190–197 (GGGVIGLE), glutamate 213, isoleucine 247, and glycine 284. Residues aspartate 325 and 332-335 (MLAH) each bind FAD. The Proton acceptor role is filled by histidine 458.

Belongs to the class-I pyridine nucleotide-disulfide oxidoreductase family. As to quaternary structure, homodimer. It depends on FAD as a cofactor.

It catalyses the reaction N(6)-[(R)-dihydrolipoyl]-L-lysyl-[protein] + NAD(+) = N(6)-[(R)-lipoyl]-L-lysyl-[protein] + NADH + H(+). The sequence is that of Dihydrolipoyl dehydrogenase from Trypanosoma brucei brucei.